Here is a 122-residue protein sequence, read N- to C-terminus: Large ribosomal subunit protein uL14 (122 aa).

Belongs to the universal ribosomal protein uL14 family. In terms of assembly, part of the 50S ribosomal subunit. Forms a cluster with proteins L3 and L19. In the 70S ribosome, L14 and L19 interact and together make contacts with the 16S rRNA in bridges B5 and B8.

Its function is as follows. Binds to 23S rRNA. Forms part of two intersubunit bridges in the 70S ribosome. The sequence is that of Large ribosomal subunit protein uL14 from Leuconostoc mesenteroides subsp. mesenteroides (strain ATCC 8293 / DSM 20343 / BCRC 11652 / CCM 1803 / JCM 6124 / NCDO 523 / NBRC 100496 / NCIMB 8023 / NCTC 12954 / NRRL B-1118 / 37Y).